Consider the following 238-residue polypeptide: Pyridoxine 5'-phosphate synthase (238 aa).

Asparagine 6 provides a ligand contact to 3-amino-2-oxopropyl phosphate. Residue 8-9 coordinates 1-deoxy-D-xylulose 5-phosphate; the sequence is DH. Arginine 17 lines the 3-amino-2-oxopropyl phosphate pocket. The active-site Proton acceptor is histidine 42. Residues arginine 44 and histidine 49 each coordinate 1-deoxy-D-xylulose 5-phosphate. The Proton acceptor role is filled by glutamate 69. Threonine 99 contacts 1-deoxy-D-xylulose 5-phosphate. The active-site Proton donor is histidine 186. Residues glycine 187 and 208-209 contribute to the 3-amino-2-oxopropyl phosphate site; that span reads GH.

This sequence belongs to the PNP synthase family. In terms of assembly, homooctamer; tetramer of dimers.

Its subcellular location is the cytoplasm. The enzyme catalyses 3-amino-2-oxopropyl phosphate + 1-deoxy-D-xylulose 5-phosphate = pyridoxine 5'-phosphate + phosphate + 2 H2O + H(+). Its pathway is cofactor biosynthesis; pyridoxine 5'-phosphate biosynthesis; pyridoxine 5'-phosphate from D-erythrose 4-phosphate: step 5/5. In terms of biological role, catalyzes the complicated ring closure reaction between the two acyclic compounds 1-deoxy-D-xylulose-5-phosphate (DXP) and 3-amino-2-oxopropyl phosphate (1-amino-acetone-3-phosphate or AAP) to form pyridoxine 5'-phosphate (PNP) and inorganic phosphate. The sequence is that of Pyridoxine 5'-phosphate synthase from Anaplasma marginale (strain St. Maries).